The primary structure comprises 72 residues: Translation initiation factor IF-1 (72 aa).

Residues 1–72 (MAKEDNIEMQ…SKGRIVFRSR (72 aa)) form the S1-like domain.

It belongs to the IF-1 family. Component of the 30S ribosomal translation pre-initiation complex which assembles on the 30S ribosome in the order IF-2 and IF-3, IF-1 and N-formylmethionyl-tRNA(fMet); mRNA recruitment can occur at any time during PIC assembly.

It localises to the cytoplasm. Its function is as follows. One of the essential components for the initiation of protein synthesis. Stabilizes the binding of IF-2 and IF-3 on the 30S subunit to which N-formylmethionyl-tRNA(fMet) subsequently binds. Helps modulate mRNA selection, yielding the 30S pre-initiation complex (PIC). Upon addition of the 50S ribosomal subunit IF-1, IF-2 and IF-3 are released leaving the mature 70S translation initiation complex. The sequence is that of Translation initiation factor IF-1 from Sodalis glossinidius (strain morsitans).